The following is a 292-amino-acid chain: NAD kinase (292 aa).

D73 (proton acceptor) is an active-site residue. NAD(+) contacts are provided by residues 73–74 (DG), 147–148 (NE), H158, R175, D177, 188–193 (TAYSLS), and Q247.

The protein belongs to the NAD kinase family. A divalent metal cation is required as a cofactor.

The protein localises to the cytoplasm. The catalysed reaction is NAD(+) + ATP = ADP + NADP(+) + H(+). Functionally, involved in the regulation of the intracellular balance of NAD and NADP, and is a key enzyme in the biosynthesis of NADP. Catalyzes specifically the phosphorylation on 2'-hydroxyl of the adenosine moiety of NAD to yield NADP. In Salmonella choleraesuis (strain SC-B67), this protein is NAD kinase.